The sequence spans 346 residues: Hydroxymethylglutaryl-CoA synthase (346 aa).

Residue Asp28 participates in (3S)-3-hydroxy-3-methylglutaryl-CoA binding. The active-site Proton donor/acceptor is the Glu80. (3S)-3-hydroxy-3-methylglutaryl-CoA-binding residues include Cys112 and Thr153. The Acyl-thioester intermediate role is filled by Cys112. Arg199 is a CoA binding site. Residues Thr201 and His234 each coordinate (3S)-3-hydroxy-3-methylglutaryl-CoA. Catalysis depends on His234, which acts as the Proton donor/acceptor. Residue Lys239 participates in CoA binding. Residues Arg243, Asn266, and Ser296 each contribute to the (3S)-3-hydroxy-3-methylglutaryl-CoA site.

This sequence belongs to the thiolase-like superfamily. Archaeal HMG-CoA synthase family. Interacts with acetoacetyl-CoA thiolase that catalyzes the precedent step in the pathway and with a DUF35 protein. The acetoacetyl-CoA thiolase/HMG-CoA synthase complex channels the intermediate via a fused CoA-binding site, which allows for efficient coupling of the endergonic thiolase reaction with the exergonic HMGCS reaction.

The enzyme catalyses acetoacetyl-CoA + acetyl-CoA + H2O = (3S)-3-hydroxy-3-methylglutaryl-CoA + CoA + H(+). It functions in the pathway metabolic intermediate biosynthesis; (R)-mevalonate biosynthesis; (R)-mevalonate from acetyl-CoA: step 2/3. In terms of biological role, catalyzes the condensation of acetyl-CoA with acetoacetyl-CoA to form 3-hydroxy-3-methylglutaryl-CoA (HMG-CoA). Functions in the mevalonate (MVA) pathway leading to isopentenyl diphosphate (IPP), a key precursor for the biosynthesis of isoprenoid compounds that are building blocks of archaeal membrane lipids. This Methanosphaera stadtmanae (strain ATCC 43021 / DSM 3091 / JCM 11832 / MCB-3) protein is Hydroxymethylglutaryl-CoA synthase.